The chain runs to 224 residues: MNILFFGPNGSGKGTQGAILKEKYSLPHIESGAIFRENISKGTELGAKAKEYIDRGDLVPDDITIPMILDRLQQDDCKKGWLLDGFPRNKVQAETLDATLKKANMALDIVVEIELDREIAKNRIMGRRLCVNDNNHPNNIFIDAIKPDGDKCRVCGGELKTRSDDQDEAAIDKRHNIYYDTETGTLAAAYYFRDLAAKGGSLKYITLDGAPGVKEVAAELVSKL.

Position 10–15 (10–15) interacts with ATP; sequence GSGKGT. Positions 30–59 are NMP; it reads ESGAIFRENISKGTELGAKAKEYIDRGDLV. AMP contacts are provided by residues Ser31, Arg36, 57–59, 85–88, and Gln92; these read DLV and GFPR. Residues 126 to 165 form an LID region; the sequence is GRRLCVNDNNHPNNIFIDAIKPDGDKCRVCGGELKTRSDD. Arg127 is a binding site for ATP. AMP contacts are provided by Arg162 and Arg174. Position 211 (Pro211) interacts with ATP.

This sequence belongs to the adenylate kinase family. In terms of assembly, monomer.

It localises to the cytoplasm. It carries out the reaction AMP + ATP = 2 ADP. It functions in the pathway purine metabolism; AMP biosynthesis via salvage pathway; AMP from ADP: step 1/1. In terms of biological role, catalyzes the reversible transfer of the terminal phosphate group between ATP and AMP. Plays an important role in cellular energy homeostasis and in adenine nucleotide metabolism. The protein is Adenylate kinase of Desulfosudis oleivorans (strain DSM 6200 / JCM 39069 / Hxd3) (Desulfococcus oleovorans).